We begin with the raw amino-acid sequence, 152 residues long: Small ribosomal subunit protein uS15 (152 aa).

The span at 1-11 shows a compositional bias: basic residues; that stretch reads MARMHARRRGK. A disordered region spans residues 1–25; that stretch reads MARMHARRRGKSSSVRPARNEAPAW.

Belongs to the universal ribosomal protein uS15 family. Part of the 30S ribosomal subunit.

This chain is Small ribosomal subunit protein uS15, found in Methanoregula boonei (strain DSM 21154 / JCM 14090 / 6A8).